Reading from the N-terminus, the 261-residue chain is Triosephosphate isomerase (261 aa).

Residue 10 to 12 (NWK) coordinates substrate. The active-site Electrophile is His100. Glu172 serves as the catalytic Proton acceptor. Substrate is bound by residues Gly178, Ser218, and 239 to 240 (GG).

This sequence belongs to the triosephosphate isomerase family. Homodimer.

The protein resides in the cytoplasm. The catalysed reaction is D-glyceraldehyde 3-phosphate = dihydroxyacetone phosphate. It functions in the pathway carbohydrate biosynthesis; gluconeogenesis. The protein operates within carbohydrate degradation; glycolysis; D-glyceraldehyde 3-phosphate from glycerone phosphate: step 1/1. Functionally, involved in the gluconeogenesis. Catalyzes stereospecifically the conversion of dihydroxyacetone phosphate (DHAP) to D-glyceraldehyde-3-phosphate (G3P). The polypeptide is Triosephosphate isomerase (Nocardia farcinica (strain IFM 10152)).